Consider the following 221-residue polypeptide: ATP phosphoribosyltransferase (221 aa).

This sequence belongs to the ATP phosphoribosyltransferase family. Short subfamily. As to quaternary structure, heteromultimer composed of HisG and HisZ subunits.

The protein resides in the cytoplasm. It carries out the reaction 1-(5-phospho-beta-D-ribosyl)-ATP + diphosphate = 5-phospho-alpha-D-ribose 1-diphosphate + ATP. It functions in the pathway amino-acid biosynthesis; L-histidine biosynthesis; L-histidine from 5-phospho-alpha-D-ribose 1-diphosphate: step 1/9. In terms of biological role, catalyzes the condensation of ATP and 5-phosphoribose 1-diphosphate to form N'-(5'-phosphoribosyl)-ATP (PR-ATP). Has a crucial role in the pathway because the rate of histidine biosynthesis seems to be controlled primarily by regulation of HisG enzymatic activity. In Symbiobacterium thermophilum (strain DSM 24528 / JCM 14929 / IAM 14863 / T), this protein is ATP phosphoribosyltransferase.